We begin with the raw amino-acid sequence, 522 residues long: Amphoterin-induced protein 2 (522 aa).

Positions 1 to 39 (MSLRVHTLPTLLGAVVRPGCRELLCLLMITVAVGPGASG) are cleaved as a signal peptide. An LRRNT domain is found at 40 to 68 (VCPTACICATDIVSCTNKHLSKVPGNLFR). At 40–398 (VCPTACICAT…RSHAHEAFNT (359 aa)) the chain is on the extracellular side. 2 disulfide bridges follow: Cys-41-Cys-47 and Cys-45-Cys-54. LRR repeat units follow at residues 69-90 (LMKRLDLSYNRIGLLDSEWIPV), 94-115 (KLNTLILRHNNITSISTGSFST), 118-139 (NLKCLDLSSNKLKTVKNAVFQE), 142-163 (VLEVLLLYNNHISYLDPSAFGG), 166-187 (QLQKLYLSGNFLTQFPMDLYVG), and 193-214 (ELMFLDVSYNRIPSMPMHHINL). A glycan (N-linked (GlcNAc...) asparagine) is linked at Asn-104. In terms of domain architecture, LRRCT spans 228 to 284 (NPFVCDCSLYSLLVFWYRRHFSSVMDFKNDYTCRLWSDSRHSRQVLLLQDSFMNCSD). Disulfide bonds link Cys-232/Cys-260 and Cys-234/Cys-282. N-linked (GlcNAc...) asparagine glycosylation is found at Asn-281, Asn-288, Asn-345, Asn-373, Asn-381, and Asn-384. In terms of domain architecture, Ig-like C2-type spans 289-379 (GSFRALGFIH…RLLNETVDVT (91 aa)). A disulfide bridge links Cys-310 with Cys-363. The chain crosses the membrane as a helical span at residues 399–419 (AFTTLAACVASIVLVLLYLYL). At 420–522 (TPCPCKCKTK…FSDTPFVAST (103 aa)) the chain is on the cytoplasmic side. Residues 501-522 (RGKSDSDSVNSVFSDTPFVAST) are disordered.

This sequence belongs to the immunoglobulin superfamily. AMIGO family. In terms of assembly, binds itself as well as AMIGO1 and AMIGO3.

It localises to the cell membrane. It is found in the nucleus. Functionally, required for depolarization-dependent survival of cultured cerebellar granule neurons. May mediate homophilic as well as heterophilic cell-cell interaction with AMIGO1 or AMIGO3. May contribute to signal transduction through its intracellular domain. The protein is Amphoterin-induced protein 2 of Pongo abelii (Sumatran orangutan).